Consider the following 205-residue polypeptide: Ribosomal RNA small subunit methyltransferase G (205 aa).

Residues Gly76, Leu81, 127–128, and Arg140 contribute to the S-adenosyl-L-methionine site; that span reads IE.

It belongs to the methyltransferase superfamily. RNA methyltransferase RsmG family.

It is found in the cytoplasm. It catalyses the reaction guanosine(527) in 16S rRNA + S-adenosyl-L-methionine = N(7)-methylguanosine(527) in 16S rRNA + S-adenosyl-L-homocysteine. In terms of biological role, specifically methylates the N7 position of guanine in position 527 of 16S rRNA. This Francisella tularensis subsp. holarctica (strain FTNF002-00 / FTA) protein is Ribosomal RNA small subunit methyltransferase G.